The following is an 832-amino-acid chain: Disintegrin and metalloproteinase domain-containing protein 23 (832 aa).

Polar residues predominate over residues 1-10 (MKPPGSSSRQ). The disordered stretch occupies residues 1–37 (MKPPGSSSRQPPLAGCSLAGASCGPQRGPAGSVPASA). Residues 1–59 (MKPPGSSSRQPPLAGCSLAGASCGPQRGPAGSVPASAPARTPPCRLLLVLLLLPPLAAS) form the signal peptide. A compositionally biased stretch (low complexity) spans 28 to 37 (GPAGSVPASA). The propeptide occupies 60–286 (SRPRAWGAAA…ELQWLKRRKR (227 aa)). N-linked (GlcNAc...) asparagine glycans are attached at residues Asn76, Asn96, Asn100, and Asn263. Topologically, residues 287–792 (AVNPSRGIFE…EGPKGPSATN (506 aa)) are extracellular. The Peptidase M12B domain occupies 299-496 (KYLELMIVND…GGGACLFNRP (198 aa)). 3 cysteine pairs are disulfide-bonded: Cys408–Cys491, Cys450–Cys475, and Cys452–Cys459. The 87-residue stretch at 502-588 (PTECGNGYVE…QCPPNLHKQD (87 aa)) folds into the Disintegrin domain. Residues Asn547 and Asn548 are each glycosylated (N-linked (GlcNAc...) asparagine). Cysteines 560 and 580 form a disulfide. Residues 563-568 (AVNECD) are may bind the integrin receptor. Asn664 and Asn732 each carry an N-linked (GlcNAc...) asparagine glycan. Positions 732 to 769 (NMSSCPLDSKGKVCSGHGVCSNEATCICDFTWAGTDCS) constitute an EGF-like domain. 3 cysteine pairs are disulfide-bonded: Cys736–Cys751, Cys745–Cys757, and Cys759–Cys768. The helical transmembrane segment at 793–813 (LIIGSIAGAILVAAIVLGGTG) threads the bilayer. Residues 814–832 (WGFKNVKKRRFDPTQQGPI) are Cytoplasmic-facing.

In terms of assembly, can bind to LGI1 and LGI4. Ligand for integrin alpha-V/beta-3. As to expression, highly expressed in the brain and weakly expressed in the heart. In the brain, expressed prominently in the amygdala, caudate nucleus, hypothalamus, thalamus, cerebral cortex and occipital pole.

It localises to the cell membrane. The protein localises to the secreted. Its function is as follows. May play a role in cell-cell and cell-matrix interactions. This is a non-catalytic metalloprotease-like protein. This Homo sapiens (Human) protein is Disintegrin and metalloproteinase domain-containing protein 23 (ADAM23).